A 94-amino-acid chain; its full sequence is Evasin P1172 (94 aa).

3 disulfide bridges follow: C35-C54, C39-C56, and C50-C67. N38, N44, N53, and N80 each carry an N-linked (GlcNAc...) asparagine glycan.

It localises to the secreted. Functionally, salivary chemokine-binding protein which binds to host chemokines CXCL1, CXCL2, CXCL5 and CXCL8. The sequence is that of Evasin P1172 from Ixodes ricinus (Common tick).